A 156-amino-acid polypeptide reads, in one-letter code: Cytochrome c-type biogenesis protein CcmE (156 aa).

At 1–8 the chain is on the cytoplasmic side; sequence MNPLRRKR. A helical; Signal-anchor for type II membrane protein transmembrane segment spans residues 9-29; it reads LLIILAILAGVGIAVGLAMSA. Residues 30-156 lie on the Periplasmic side of the membrane; the sequence is LRENINLFYT…RIRSLPRRAK (127 aa). Residues His124 and Tyr128 each coordinate heme.

This sequence belongs to the CcmE/CycJ family.

It localises to the cell inner membrane. Its function is as follows. Heme chaperone required for the biogenesis of c-type cytochromes. Transiently binds heme delivered by CcmC and transfers the heme to apo-cytochromes in a process facilitated by CcmF and CcmH. The polypeptide is Cytochrome c-type biogenesis protein CcmE (Pseudomonas fluorescens).